The sequence spans 344 residues: Protein pelota homolog (344 aa).

Belongs to the eukaryotic release factor 1 family. Pelota subfamily. In terms of assembly, monomer. It depends on a divalent metal cation as a cofactor.

It is found in the cytoplasm. Its function is as follows. May function in recognizing stalled ribosomes, interact with stem-loop structures in stalled mRNA molecules, and effect endonucleolytic cleavage of the mRNA. May play a role in the release non-functional ribosomes and degradation of damaged mRNAs. Has endoribonuclease activity. In Saccharolobus islandicus (strain Y.N.15.51 / Yellowstone #2) (Sulfolobus islandicus), this protein is Protein pelota homolog.